Consider the following 357-residue polypeptide: Phosphate acyltransferase (357 aa).

The protein belongs to the PlsX family. Homodimer. Probably interacts with PlsY.

It is found in the cytoplasm. The catalysed reaction is a fatty acyl-[ACP] + phosphate = an acyl phosphate + holo-[ACP]. The protein operates within lipid metabolism; phospholipid metabolism. Catalyzes the reversible formation of acyl-phosphate (acyl-PO(4)) from acyl-[acyl-carrier-protein] (acyl-ACP). This enzyme utilizes acyl-ACP as fatty acyl donor, but not acyl-CoA. This Roseobacter denitrificans (strain ATCC 33942 / OCh 114) (Erythrobacter sp. (strain OCh 114)) protein is Phosphate acyltransferase.